We begin with the raw amino-acid sequence, 261 residues long: MTHQTHAYHMVNPSPWPLTGALSALLMTSGLTMWFHFNSMTLLTLGLTTNMLTMYQWWRDIIRESTFQGHHTPNVQKGLRYGMILFIISEVLFFTGFFWAFYHSSLAPTPELGGCWPPTGIHPLNPLEVPLLNTSVLLASGVSITWAHHSLMEGNRNHMLQALFITISLGVYFTLLQASEYYEAPFTISDGVYGSTFFVATGFHGLHVIIGSTFLIVCFFRQLKFHFTSNHHFGFEAAAWYWHFVDVVWLFLYVSIYWWGS.

At 1 to 15 the chain is on the mitochondrial matrix side; the sequence is MTHQTHAYHMVNPSP. A helical membrane pass occupies residues 16 to 34; that stretch reads WPLTGALSALLMTSGLTMW. Over 35–40 the chain is Mitochondrial intermembrane; that stretch reads FHFNSM. The chain crosses the membrane as a helical span at residues 41–66; the sequence is TLLTLGLTTNMLTMYQWWRDIIREST. At 67–72 the chain is on the mitochondrial matrix side; it reads FQGHHT. A helical transmembrane segment spans residues 73-105; it reads PNVQKGLRYGMILFIISEVLFFTGFFWAFYHSS. The Mitochondrial intermembrane portion of the chain corresponds to 106-128; it reads LAPTPELGGCWPPTGIHPLNPLE. A helical transmembrane segment spans residues 129–152; sequence VPLLNTSVLLASGVSITWAHHSLM. The Mitochondrial matrix segment spans residues 153–155; that stretch reads EGN. Residues 156–183 form a helical membrane-spanning segment; it reads RNHMLQALFITISLGVYFTLLQASEYYE. Residues 184–190 are Mitochondrial intermembrane-facing; that stretch reads APFTISD. Residues 191–223 form a helical membrane-spanning segment; it reads GVYGSTFFVATGFHGLHVIIGSTFLIVCFFRQL. Residues 224-232 are Mitochondrial matrix-facing; the sequence is KFHFTSNHH. Residues 233–256 traverse the membrane as a helical segment; sequence FGFEAAAWYWHFVDVVWLFLYVSI. Topologically, residues 257–261 are mitochondrial intermembrane; the sequence is YWWGS.

Belongs to the cytochrome c oxidase subunit 3 family. Component of the cytochrome c oxidase (complex IV, CIV), a multisubunit enzyme composed of 14 subunits. The complex is composed of a catalytic core of 3 subunits MT-CO1, MT-CO2 and MT-CO3, encoded in the mitochondrial DNA, and 11 supernumerary subunits COX4I, COX5A, COX5B, COX6A, COX6B, COX6C, COX7A, COX7B, COX7C, COX8 and NDUFA4, which are encoded in the nuclear genome. The complex exists as a monomer or a dimer and forms supercomplexes (SCs) in the inner mitochondrial membrane with NADH-ubiquinone oxidoreductase (complex I, CI) and ubiquinol-cytochrome c oxidoreductase (cytochrome b-c1 complex, complex III, CIII), resulting in different assemblies (supercomplex SCI(1)III(2)IV(1) and megacomplex MCI(2)III(2)IV(2)).

The protein localises to the mitochondrion inner membrane. The catalysed reaction is 4 Fe(II)-[cytochrome c] + O2 + 8 H(+)(in) = 4 Fe(III)-[cytochrome c] + 2 H2O + 4 H(+)(out). In terms of biological role, component of the cytochrome c oxidase, the last enzyme in the mitochondrial electron transport chain which drives oxidative phosphorylation. The respiratory chain contains 3 multisubunit complexes succinate dehydrogenase (complex II, CII), ubiquinol-cytochrome c oxidoreductase (cytochrome b-c1 complex, complex III, CIII) and cytochrome c oxidase (complex IV, CIV), that cooperate to transfer electrons derived from NADH and succinate to molecular oxygen, creating an electrochemical gradient over the inner membrane that drives transmembrane transport and the ATP synthase. Cytochrome c oxidase is the component of the respiratory chain that catalyzes the reduction of oxygen to water. Electrons originating from reduced cytochrome c in the intermembrane space (IMS) are transferred via the dinuclear copper A center (CU(A)) of subunit 2 and heme A of subunit 1 to the active site in subunit 1, a binuclear center (BNC) formed by heme A3 and copper B (CU(B)). The BNC reduces molecular oxygen to 2 water molecules using 4 electrons from cytochrome c in the IMS and 4 protons from the mitochondrial matrix. The protein is Cytochrome c oxidase subunit 3 (MT-CO3) of Antidorcas marsupialis (Springbok).